Consider the following 301-residue polypeptide: NAD kinase (301 aa).

Asp-84 functions as the Proton acceptor in the catalytic mechanism. NAD(+) contacts are provided by residues 84 to 85, Arg-89, 158 to 159, Lys-169, Asn-188, 199 to 204, and Gln-258; these read DG, NE, and TAYSFS.

The protein belongs to the NAD kinase family. It depends on a divalent metal cation as a cofactor.

The protein localises to the cytoplasm. It carries out the reaction NAD(+) + ATP = ADP + NADP(+) + H(+). Its function is as follows. Involved in the regulation of the intracellular balance of NAD and NADP, and is a key enzyme in the biosynthesis of NADP. Catalyzes specifically the phosphorylation on 2'-hydroxyl of the adenosine moiety of NAD to yield NADP. This is NAD kinase from Tropheryma whipplei (strain Twist) (Whipple's bacillus).